The primary structure comprises 139 residues: Large ribosomal subunit protein uL16c (139 aa).

It belongs to the universal ribosomal protein uL16 family. As to quaternary structure, part of the 50S ribosomal subunit.

The protein localises to the plastid. It localises to the chloroplast. In Cryptomeria japonica (Japanese cedar), this protein is Large ribosomal subunit protein uL16c.